The chain runs to 110 residues: Ribonuclease P protein component 1 (110 aa).

Belongs to the eukaryotic/archaeal RNase P protein component 1 family. In terms of assembly, consists of a catalytic RNA component and at least 4-5 protein subunits.

The protein localises to the cytoplasm. The enzyme catalyses Endonucleolytic cleavage of RNA, removing 5'-extranucleotides from tRNA precursor.. Part of ribonuclease P, a protein complex that generates mature tRNA molecules by cleaving their 5'-ends. The polypeptide is Ribonuclease P protein component 1 (Aeropyrum pernix (strain ATCC 700893 / DSM 11879 / JCM 9820 / NBRC 100138 / K1)).